The sequence spans 275 residues: Voltage-dependent calcium channel gamma-5 subunit (275 aa).

Helical transmembrane passes span 8–28, 103–123, 129–149, and 181–201; these read ALTL…GIAV, FPLV…IGHI, ILAF…VVGL, and FAAI…YLFM.

Belongs to the PMP-22/EMP/MP20 family. CACNG subfamily. In terms of assembly, the L-type calcium channel is composed of five subunits: alpha-1, alpha-2/delta, beta and gamma. Acts as an auxiliary subunit for AMPA-selective glutamate receptors (AMPARs). Found in a complex with GRIA1, GRIA2, GRIA3, GRIA4, CNIH2, CNIH3, CACNG2, CACNG3, CACNG4, CACNG7 and CACNG8. Interacts with GRIA1, GRIA2, GRIA3 and GRIA4. Brain. Enriched in Bergman glia, as well as a variety of neuronal populations including locus coeruleus, olfactory bulb, lateral septal nucleus, interpeduncular nucleus, and the CA2 and rostral/medial CA1 regions of hippocampus.

The protein resides in the membrane. It localises to the postsynaptic density membrane. Functionally, regulates the gating properties of AMPA-selective glutamate receptors (AMPARs). Modulates their gating properties by accelerating their rates of activation, deactivation and desensitization. Displays subunit-specific AMPA receptor regulation. Shows specificity for GRIA1, GRIA4 and the long isoform of GRIA2. Thought to stabilize the calcium channel in an inactivated (closed) state. The sequence is that of Voltage-dependent calcium channel gamma-5 subunit (Cacng5) from Mus musculus (Mouse).